Consider the following 805-residue polypeptide: Phosphoinositide 3-kinase adapter protein 1 (805 aa).

A TIR domain is found at 8–145 (RGCDILIVYS…AVKKAISEDS (138 aa)). A necessary and sufficient to mediate inhibition of NF-kappa-B downstream of activated TLRs; may mediate interaction with MYD88 and TIRAP region spans residues 10–144 (CDILIVYSPD…AAVKKAISED (135 aa)). The interval 145 to 165 (SGCDSVTDTEPEDEKVVSYSK) is disordered. In terms of domain architecture, DBB spans 181-317 (VQPDRIRCGA…NIPASGLHLF (137 aa)). The residue at position 263 (Y263) is a Phosphotyrosine. Phosphotyrosine; by SYK occurs at positions 419, 444, and 459. Position 513 is a phosphotyrosine; by ABL1 (Y513). The interval 527 to 547 (ASRPPVPVPRPETTAPGAHQL) is disordered. Phosphotyrosine; by ABL1 is present on residues Y553 and Y570. The interval 571 to 590 (VSSESIRKGPPVRPWRDRPQ) is disordered. Y594 bears the Phosphotyrosine; by ABL1 mark. S642 bears the Phosphoserine mark. Residues 645 to 667 (FQQENLKRLRDSITRRQREKQKS) adopt a coiled-coil conformation. Positions 654 to 672 (RDSITRRQREKQKSGKQTD) are enriched in basic and acidic residues. The disordered stretch occupies residues 654–679 (RDSITRRQREKQKSGKQTDLEITVPI). Residue Y694 is modified to Phosphotyrosine; by ABL1. The interval 697 to 805 (GPRKSVIPPR…PPPPVPPRGR (109 aa)) is disordered. A compositionally biased stretch (basic and acidic residues) spans 707-716 (TELRRGDWKT). A compositionally biased stretch (low complexity) spans 717–740 (DSTSSTASSTSNRSSTRSLLSVSS). S718 bears the Phosphoserine mark. Positions 795 to 805 (HPPPPVPPRGR) are enriched in pro residues.

As to quaternary structure, homooligomer. Interacts (phosphorylated on tyrosine residues within YXXM motifs) with PIK3R1 (via SH2 domain); required for BCR- and TLR-mediated activation of phosphoinositide 3-kinase. Interacts (via polyproline C-terminal region) with ABI1 (via SH3 domain); the interaction promotes phosphorylation of PIK3AP1 by ABL1. May interact with MYD88 and TIRAP. In terms of processing, constitutively phosphorylated. Phosphorylated on tyrosine residues in C-terminal region by ABL1. Phosphorylated on tyrosine residues within the YXXM motifs by BTK and SYK. Isoform 1 and isoform 2 are phosphorylated on tyrosine residues, most likely within the YXXM motifs, via CD19 activation. Toll-like receptor activation induces appearance of a phosphorylated form associated with membranes. In terms of tissue distribution, expressed in natural killer (NK) cells.

Its subcellular location is the cytoplasm. It is found in the cell membrane. Signaling adapter that contributes to B-cell development by linking B-cell receptor (BCR) signaling to the phosphoinositide 3-kinase (PI3K)-Akt signaling pathway. Has a complementary role to the BCR coreceptor CD19, coupling BCR and PI3K activation by providing a docking site for the PI3K subunit PIK3R1. Alternatively, links Toll-like receptor (TLR) signaling to PI3K activation, a process preventing excessive inflammatory cytokine production. Also involved in the activation of PI3K in natural killer cells. May be involved in the survival of mature B-cells via activation of REL. The chain is Phosphoinositide 3-kinase adapter protein 1 (PIK3AP1) from Homo sapiens (Human).